Reading from the N-terminus, the 631-residue chain is DDB1- and CUL4-associated factor 8-like protein 2 (631 aa).

2 disordered regions span residues 1–91 and 108–163; these read MSHQ…EDFE and EEET…HEQY. The span at 44–54 shows a compositional bias: polar residues; sequence SELSVTVTGDG. 2 stretches are compositionally biased toward acidic residues: residues 77–88 and 108–147; these read SASEDIELESLE and EEET…EEEE. WD repeat units lie at residues 226-265, 269-310, 316-356, 364-404, 420-459, 467-507, and 511-550; these read DHVG…PVLN, GHTN…YFNN, QHRG…PASK, DKKV…KKEN, DFPT…GAQY, RNNT…IIQF, and SREG…ATEL. The disordered stretch occupies residues 594–631; the sequence is QDWRSGEAEFPDEESDESSSTSETSEEEVQDRVQCMPS.

It belongs to the WD repeat DCAF8 family.

The protein is DDB1- and CUL4-associated factor 8-like protein 2 (DCAF8L2) of Homo sapiens (Human).